The sequence spans 639 residues: Serine protease HtrA-like (639 aa).

Composition is skewed to basic and acidic residues over residues 1 to 13 (MDND…PREQ), 21 to 75 (YFHN…EIHQ), 106 to 187 (QQLK…KESS), and 195 to 205 (KSQKIEQKEQK). Residues 1 to 262 (MDNDKKHVIP…LENEPKNNDT (262 aa)) form a disordered region. A compositionally biased stretch (polar residues) spans 206 to 219 (ASSNETSNKELNSY). 2 stretches are compositionally biased toward basic and acidic residues: residues 220–235 (TKDK…DLKK) and 245–262 (NKLE…NNDT). A helical transmembrane segment spans residues 277–297 (IVIVVAIILIVILISAIISTM). Catalysis depends on charge relay system residues histidine 374, aspartate 404, and serine 489. Positions 527–629 (EIAEELEKKG…TLSAKIYREG (103 aa)) constitute a PDZ domain.

Belongs to the peptidase S1C family.

It is found in the cell membrane. In Staphylococcus haemolyticus (strain JCSC1435), this protein is Serine protease HtrA-like.